Here is a 353-residue protein sequence, read N- to C-terminus: UDP-N-acetylglucosamine--N-acetylmuramyl-(pentapeptide) pyrophosphoryl-undecaprenol N-acetylglucosamine transferase (353 aa).

UDP-N-acetyl-alpha-D-glucosamine contacts are provided by residues 10–12, Asn124, Ser183, and Gln283; that span reads TGG.

It belongs to the glycosyltransferase 28 family. MurG subfamily.

It localises to the cell inner membrane. It carries out the reaction di-trans,octa-cis-undecaprenyl diphospho-N-acetyl-alpha-D-muramoyl-L-alanyl-D-glutamyl-meso-2,6-diaminopimeloyl-D-alanyl-D-alanine + UDP-N-acetyl-alpha-D-glucosamine = di-trans,octa-cis-undecaprenyl diphospho-[N-acetyl-alpha-D-glucosaminyl-(1-&gt;4)]-N-acetyl-alpha-D-muramoyl-L-alanyl-D-glutamyl-meso-2,6-diaminopimeloyl-D-alanyl-D-alanine + UDP + H(+). Its pathway is cell wall biogenesis; peptidoglycan biosynthesis. Its function is as follows. Cell wall formation. Catalyzes the transfer of a GlcNAc subunit on undecaprenyl-pyrophosphoryl-MurNAc-pentapeptide (lipid intermediate I) to form undecaprenyl-pyrophosphoryl-MurNAc-(pentapeptide)GlcNAc (lipid intermediate II). The chain is UDP-N-acetylglucosamine--N-acetylmuramyl-(pentapeptide) pyrophosphoryl-undecaprenol N-acetylglucosamine transferase from Helicobacter acinonychis (strain Sheeba).